The following is a 59-amino-acid chain: Large ribosomal subunit protein uL30 (59 aa).

The protein belongs to the universal ribosomal protein uL30 family. As to quaternary structure, part of the 50S ribosomal subunit.

This chain is Large ribosomal subunit protein uL30, found in Sulfurihydrogenibium sp. (strain YO3AOP1).